We begin with the raw amino-acid sequence, 407 residues long: UDP-N-acetyl-D-mannosamine dehydrogenase (407 aa).

The protein belongs to the UDP-glucose/GDP-mannose dehydrogenase family.

The catalysed reaction is UDP-N-acetyl-alpha-D-mannosamine + 2 NAD(+) + H2O = UDP-N-acetyl-alpha-D-mannosaminouronate + 2 NADH + 3 H(+). Its pathway is capsule biogenesis; capsule polysaccharide biosynthesis. Functionally, dehydrogenase involved in the biosynthesis of capsular polysaccharides. Catalyzes the NAD(+)-dependent oxidation of UDP-N-acetyl-D-mannosamine (UDP-ManNAc) to UDP-N-acetyl-D-mannosaminuronic acid (UDP-ManNAcA). In Campylobacter jejuni, this protein is UDP-N-acetyl-D-mannosamine dehydrogenase.